The chain runs to 666 residues: ATP synthase subunit alpha 2 (666 aa).

182–189 provides a ligand contact to ATP; sequence GDRATGKT. The segment at 527–666 is disordered; it reads MPAEDAAGDI…DAEAEARHKR (140 aa). Over residues 545–590 the composition is skewed to basic and acidic residues; the sequence is ARGDADRDADHGANREVSREVSPEASREVSREVSCEVSHEADRDAA. Low complexity predominate over residues 591-601; that stretch reads ADAARVAGRAP. The span at 623–641 shows a compositional bias: basic and acidic residues; that stretch reads ADGDRASASRPRPDARGDA.

This sequence belongs to the ATPase alpha/beta chains family. As to quaternary structure, F-type ATPases have 2 components, CF(1) - the catalytic core - and CF(0) - the membrane proton channel. CF(1) has five subunits: alpha(3), beta(3), gamma(1), delta(1), epsilon(1). CF(0) has three main subunits: a(1), b(2) and c(9-12). The alpha and beta chains form an alternating ring which encloses part of the gamma chain. CF(1) is attached to CF(0) by a central stalk formed by the gamma and epsilon chains, while a peripheral stalk is formed by the delta and b chains.

The protein resides in the cell inner membrane. It carries out the reaction ATP + H2O + 4 H(+)(in) = ADP + phosphate + 5 H(+)(out). In terms of biological role, produces ATP from ADP in the presence of a proton gradient across the membrane. The alpha chain is a regulatory subunit. The chain is ATP synthase subunit alpha 2 from Burkholderia pseudomallei (strain K96243).